The chain runs to 667 residues: WD40 repeat-containing protein DDB_G0271002 (667 aa).

2 WD repeats span residues 165-204 and 210-249; these read NHGV…PQET and KHKH…LLRI. Residues 278-293 are compositionally biased toward low complexity; sequence SSNSRDNNNNNSNSNN. Disordered stretches follow at residues 278–301, 316–345, and 389–440; these read SSNS…GIII, LVEN…DNDD, and DIIF…ATTT. The segment covering 325-345 has biased composition (acidic residues); sequence PMPEEEEEEEEEEVNQVDNDD. The span at 400-410 shows a compositional bias: low complexity; the sequence is NQHQQQQQQNQ. The span at 411–428 shows a compositional bias: acidic residues; the sequence is EIEEEGQEGQEEQEDGTE. A compositionally biased stretch (low complexity) spans 429–440; sequence NENNQGTIATTT.

The protein is WD40 repeat-containing protein DDB_G0271002 of Dictyostelium discoideum (Social amoeba).